The chain runs to 151 residues: uncharacterized protein (151 aa).

The tract at residues 122 to 151 is disordered; that stretch reads GVAQRQVPTTGTHSFFHCTSEGNKEKPHHF.

This is an uncharacterized protein from Homo sapiens (Human).